We begin with the raw amino-acid sequence, 779 residues long: Abnormal cell migration protein 10 (779 aa).

Over residues 78–97 (NELEADTEEDIAETADDEES) the composition is skewed to acidic residues. Disordered regions lie at residues 78–105 (NELE…EKTE), 189–217 (SSSR…PQQP), and 242–302 (AASS…NAEE). The span at 189–200 (SSSRENVKSIST) shows a compositional bias: polar residues. Positions 242–254 (AASSCSSPDGDSA) are enriched in low complexity. Positions 256 to 293 (GDSSSTESSNNRCRNSAFSSNDSCRDSLNTPSPTQVSP) are enriched in polar residues. The region spanning 317 to 407 (EAKVTKIFVK…NKLYFMRRPD (91 aa)) is the Ras-associating domain. The PH domain occupies 456–566 (PPEMEGFLYL…WLVALRIAKN (111 aa)). Composition is skewed to polar residues over residues 645-660 (SFSV…SRTS) and 688-698 (RASTSSPTIPQ). The tract at residues 645–763 (SFSVNSCQQS…SPMAPAKNDL (119 aa)) is disordered. Over residues 708–729 (PAPPPVASVMRMPPPVTPPKPC) the composition is skewed to pro residues.

It belongs to the MRL family. In terms of assembly, may interact (via Ras-associating and PH domains) with ced-10 (GTP-bound form).

It localises to the perikaryon. In terms of biological role, required cell non-autonomously for proper development of the excretory canals and for the long-range anterior-posterior migrations of embryonic neurons CAN, ALM and HSN. Plays a role, probably downstream of ced-10/rac1, in orientating axonal growth of HSN and AVM neurons in response to guidance cues such as slt-1. May regulate growth cone polarization by promoting asymmetric F-actin assembly. May be involved in signal transduction during cell migration. The chain is Abnormal cell migration protein 10 from Caenorhabditis elegans.